A 354-amino-acid chain; its full sequence is tRNA N6-adenosine threonylcarbamoyltransferase (354 aa).

The a divalent metal cation site is built by H121, H125, and Y142. Substrate contacts are provided by residues 142 to 146 (YVSGG), D174, G189, E193, and N285. D313 is a binding site for a divalent metal cation.

This sequence belongs to the KAE1 / TsaD family. Component of the EKC/KEOPS complex composed of at least bud32, cgi121, gon7, kae1 and pcc1; the whole complex dimerizes. A divalent metal cation is required as a cofactor.

It is found in the cytoplasm. The protein localises to the nucleus. It catalyses the reaction L-threonylcarbamoyladenylate + adenosine(37) in tRNA = N(6)-L-threonylcarbamoyladenosine(37) in tRNA + AMP + H(+). Component of the EKC/KEOPS complex that is required for the formation of a threonylcarbamoyl group on adenosine at position 37 (t(6)A37) in tRNAs that read codons beginning with adenine. The complex is probably involved in the transfer of the threonylcarbamoyl moiety of threonylcarbamoyl-AMP (TC-AMP) to the N6 group of A37. Kae1 likely plays a direct catalytic role in this reaction, but requires other protein(s) of the complex to fulfill this activity. The EKC/KEOPS complex also promotes both telomere uncapping and telomere elongation. The complex is required for efficient recruitment of transcriptional coactivators. The polypeptide is tRNA N6-adenosine threonylcarbamoyltransferase (gpe-1) (Neurospora crassa (strain ATCC 24698 / 74-OR23-1A / CBS 708.71 / DSM 1257 / FGSC 987)).